Reading from the N-terminus, the 445-residue chain is MSNRKYFGTDGIRGRVGDAPITPDFVLKLGWAAGKVLARHGSRKIIIGKDTRISGYMLESALEAGLAAAGLSALFTGPMPTPAVAYLTRTFRAEAGIVISASHNPFYDNGIKFFSIDGTKLPDAVEEAIEAEMEKEISCVDSAELGKASRIVDAAGRYIEFCKATFPNELSLSELKIVVDCANGATYHIAPNVLRELGANVIAIGCEPNGVNINAEVGATDVRALQARVLAEKADLGIAFDGDGDRVIMVDHEGNKVDGDQIMYIIAREGLRQGQLRGGAVGTLMSNMGLELALKQLGIPFARAKVGDRYVLEKMQEKGWRIGAENSGHVILLDKTTTGDGIVAGLQVLAAMARNHMSLHDLCSGMKMFPQILVNVRYTAGSGDPLEHESVKAVTAEVEAALGNRGRVLLRKSGTEPLIRVMVEGEDEAQVTEFAHRIADAVKAV.

Serine 102 (phosphoserine intermediate) is an active-site residue. Mg(2+)-binding residues include serine 102, aspartate 241, aspartate 243, and aspartate 245. A Phosphoserine modification is found at serine 102.

The protein belongs to the phosphohexose mutase family. Mg(2+) serves as cofactor. Activated by phosphorylation.

It catalyses the reaction alpha-D-glucosamine 1-phosphate = D-glucosamine 6-phosphate. Functionally, catalyzes the conversion of glucosamine-6-phosphate to glucosamine-1-phosphate. In Escherichia coli O139:H28 (strain E24377A / ETEC), this protein is Phosphoglucosamine mutase.